An 858-amino-acid polypeptide reads, in one-letter code: Elongation factor 2b (858 aa).

Residues Ser-17–Val-362 form the tr-type G domain. Residues Ala-26 to Ser-33, Asn-158 to Asp-161, and Ser-216 to Leu-218 contribute to the GTP site. A Diphthamide modification is found at His-715.

The protein belongs to the TRAFAC class translation factor GTPase superfamily. Classic translation factor GTPase family. EF-G/EF-2 subfamily. As to quaternary structure, binds to 80S ribosomes. Actively translating ribosomes show mutually exclusive binding of eIF5a (EIF5A or EIF5A2) and EEF2/eEF2. Interacts with serbp1; interaction sequesters eef2/eEF2 at the A-site of the ribosome, thereby blocking the interaction sites of the mRNA-tRNA complex, promoting ribosome stabilization and hibernation. Interacts with habp4; interaction takes place at the A-site of hibernating ribosomes and promotes ribosome stabilization.

Its subcellular location is the cytoplasm. The protein resides in the nucleus. The catalysed reaction is GTP + H2O = GDP + phosphate + H(+). Catalyzes the GTP-dependent ribosomal translocation step during translation elongation. During this step, the ribosome changes from the pre-translocational (PRE) to the post-translocational (POST) state as the newly formed A-site-bound peptidyl-tRNA and P-site-bound deacylated tRNA move to the P and E sites, respectively. Catalyzes the coordinated movement of the two tRNA molecules, the mRNA and conformational changes in the ribosome. The chain is Elongation factor 2b from Danio rerio (Zebrafish).